Here is a 230-residue protein sequence, read N- to C-terminus: Sugar fermentation stimulation protein homolog (230 aa).

This sequence belongs to the SfsA family.

In Clostridium acetobutylicum (strain ATCC 824 / DSM 792 / JCM 1419 / IAM 19013 / LMG 5710 / NBRC 13948 / NRRL B-527 / VKM B-1787 / 2291 / W), this protein is Sugar fermentation stimulation protein homolog.